Consider the following 318-residue polypeptide: Glycine--tRNA ligase alpha subunit (318 aa).

It belongs to the class-II aminoacyl-tRNA synthetase family. In terms of assembly, tetramer of two alpha and two beta subunits.

Its subcellular location is the cytoplasm. The catalysed reaction is tRNA(Gly) + glycine + ATP = glycyl-tRNA(Gly) + AMP + diphosphate. This Methylibium petroleiphilum (strain ATCC BAA-1232 / LMG 22953 / PM1) protein is Glycine--tRNA ligase alpha subunit.